Consider the following 391-residue polypeptide: Phosphoprotein (391 aa).

Phosphothreonine occurs at positions 10 and 16. Residues 54-65 (QKNIQHPTASHQ) are compositionally biased toward polar residues. 2 disordered regions span residues 54 to 97 (QKNI…PEPL) and 148 to 185 (PVTE…ERSG). At S69 the chain carries Phosphoserine. Phosphothreonine occurs at positions 91, 150, and 165. Phosphoserine is present on S188. The multimerization stretch occupies residues 216–279 (ISANEIMDLL…MATVKIMDPG (64 aa)). Residues 218–245 (ANEIMDLLRGMDARLQHLEQKVDKVLAQ) adopt a coiled-coil conformation. At T250 the chain carries Phosphothreonine. The residue at position 257 (S257) is a Phosphoserine. 2 positions are modified to phosphothreonine: T258 and T282. Phosphoserine occurs at positions 292 and 294. A Phosphothreonine modification is found at T298. 2 positions are modified to phosphoserine: S301 and S374. The segment at 343–391 (AGRKVMITKMITDCVANPQMKQAFEQRLAKASTEDALNDIKRDIIRSAI) is interaction with the nucleoprotein. T375 is subject to Phosphothreonine.

It belongs to the rubulavirus/avulavirus P protein family. In terms of assembly, homotetramer. Interacts (via multimerization domain) with polymerase L; this interaction forms the polymerase L-P complex. Interacts (via N-terminus) with N0 (via Ncore); this interaction allows P to chaperon N0 to avoid N polymerization before encapsidation. Interacts (via C-terminus) with N-RNA template; this interaction positions the polymerase on the template for both transcription and replication. Interacts with host RPS6KB1 kinase; this interaction may play a role in the viral replication and transcription.

Its function is as follows. Essential cofactor of the RNA polymerase L that plays a central role in the transcription and replication by forming the polymerase complex with RNA polymerase L and recruiting L to the genomic N-RNA template for RNA synthesis. Also plays a central role in the encapsidation of nascent RNA chains by forming the encapsidation complex with the nucleocapsid protein N (N-P complex). Acts as a chaperone for newly synthesized free N protein, so-called N0, allowing encapsidation of nascent RNA chains during replication. The nucleoprotein protein N prevents excessive phosphorylation of P, which leads to down-regulation of viral transcription/ replication. Participates, together with N, in the formation of viral factories (viroplasms), which are large inclusions in the host cytoplasm where replication takes place. This chain is Phosphoprotein (P/V), found in Homo sapiens (Human).